The following is a 677-amino-acid chain: Potassium channel KAT1 (677 aa).

The Cytoplasmic segment spans residues 1–63; that stretch reads MSISWTRNFF…PFNPRYRAWE (63 aa). The chain crosses the membrane as a helical span at residues 64 to 84; the sequence is MWLVLLVIYSAWICPFQFAFI. The Extracellular portion of the chain corresponds to 85 to 90; sequence TYKKDA. A helical membrane pass occupies residues 91-111; it reads IFIIDNIVNGFFAIDIILTFF. Residues 112-134 are Cytoplasmic-facing; sequence VAYLDSHSYLLVDSPKKIAIRYL. Residues 135-155 traverse the membrane as a helical segment; sequence STWFAFDVCSTAPFQPLSLLF. At 156 to 165 the chain is on the extracellular side; it reads NYNGSELGFR. A helical; Voltage-sensor membrane pass occupies residues 166 to 186; sequence ILSMLRLWRLRRVSSLFARLE. The Cytoplasmic segment spans residues 187–200; sequence KDIRFNYFWIRCTK. Residues 201–221 traverse the membrane as a helical segment; that stretch reads LISVTLFAIHCAGCFNYLIAD. Residues 222–248 are Extracellular-facing; that stretch reads RYPNPRKTWIGAVYPNFKEASLWNRYV. The segment at residues 249-268 is an intramembrane region (pore-forming); that stretch reads TALYWSITTLTTTGYGDFHA. Residues 269 to 272 are Extracellular-facing; sequence ENPR. Residues 273 to 293 form a helical membrane-spanning segment; it reads EMLFDIFFMMFNLGLTAYLIG. The Cytoplasmic segment spans residues 294–677; sequence NMTNLVVHWT…DGDHLYFSSN (384 aa). 377–496 lines the a nucleoside 3',5'-cyclic phosphate pocket; that stretch reads LFQGVSRNFL…RVIMNNLFMK (120 aa). Basic and acidic residues predominate over residues 568 to 577; that stretch reads IERAKVERSS. A disordered region spans residues 568–601; the sequence is IERAKVERSSSETAGRSYANDSSKKDPYCSSSNQ. Residues 612–677 form the KHA domain; sequence RVTIHMMSES…DGDHLYFSSN (66 aa).

It belongs to the potassium channel family. Plant (TC 1.A.1.4) subfamily. As to quaternary structure, the potassium channel is probably composed of a homo- or heterotetrameric complex of pore-forming subunits. May interact with AKT2 and KAT2. Interacts with SLAC1 and SLAH3. As to expression, expressed in guard cells, and in roots.

The protein resides in the membrane. Highly selective inward-rectifying potassium channel. This voltage-gated channel could mediate long-term potassium influx into guard cells leading to stomatal opening. Assuming opened or closed conformations in response to the voltage difference across the membrane, the channel is activated by hyperpolarization. The channel activity is enhanced upon external acidification. Also permeable to ammonium ions. Blocked by tetraethylammonium and barium ions. In Arabidopsis thaliana (Mouse-ear cress), this protein is Potassium channel KAT1 (KAT1).